Consider the following 426-residue polypeptide: Glucan endo-1,3-beta-glucosidase 11 (426 aa).

Residues 1-30 (MELTSFHRSSLLFLISLTLIILPTTTTSIG) form the signal peptide. N-linked (GlcNAc...) asparagine glycosylation occurs at Asn-112. Catalysis depends on Glu-121, which acts as the Proton donor. Residue Asn-126 is glycosylated (N-linked (GlcNAc...) asparagine). The Nucleophile role is filled by Glu-266. Residues 360–372 (GGGTGGGNSSSGG) are compositionally biased toward gly residues. Residues 360–389 (GGGTGGGNSSSGGGRDKSPVFPVSPVAPDS) form a disordered region. A glycan (N-linked (GlcNAc...) asparagine) is linked at Asn-367. Ser-398 carries GPI-anchor amidated serine lipidation. Positions 399–426 (ASPVTGKRKGKGAILSLVVSMLLARHLL) are cleaved as a propeptide — removed in mature form.

This sequence belongs to the glycosyl hydrolase 17 family.

Its subcellular location is the secreted. It is found in the cell wall. The protein localises to the cell membrane. The enzyme catalyses Hydrolysis of (1-&gt;3)-beta-D-glucosidic linkages in (1-&gt;3)-beta-D-glucans.. The chain is Glucan endo-1,3-beta-glucosidase 11 from Arabidopsis thaliana (Mouse-ear cress).